The primary structure comprises 385 residues: tRNA-specific 2-thiouridylase MnmA (385 aa).

Residues alanine 8 to serine 15 and leucine 34 contribute to the ATP site. The Nucleophile role is filled by cysteine 102. A disulfide bridge links cysteine 102 with cysteine 200. Residue glycine 126 coordinates ATP. Residues lysine 150–glutamine 152 form an interaction with tRNA region. The active-site Cysteine persulfide intermediate is cysteine 200. The interval arginine 307 to tyrosine 308 is interaction with tRNA.

The protein belongs to the MnmA/TRMU family.

The protein resides in the cytoplasm. The enzyme catalyses S-sulfanyl-L-cysteinyl-[protein] + uridine(34) in tRNA + AH2 + ATP = 2-thiouridine(34) in tRNA + L-cysteinyl-[protein] + A + AMP + diphosphate + H(+). Its function is as follows. Catalyzes the 2-thiolation of uridine at the wobble position (U34) of tRNA, leading to the formation of s(2)U34. This is tRNA-specific 2-thiouridylase MnmA from Heliobacterium modesticaldum (strain ATCC 51547 / Ice1).